A 125-amino-acid chain; its full sequence is Transposase for transposon Tn554 (125 aa).

In terms of biological role, one of three proteins encoded by transposon Tn554 required for its transposition. In Staphylococcus aureus (strain Mu50 / ATCC 700699), this protein is Transposase for transposon Tn554 (tnpC1).